The sequence spans 214 residues: NADH-quinone oxidoreductase subunit C (214 aa).

This sequence belongs to the complex I 30 kDa subunit family. In terms of assembly, NDH-1 is composed of 14 different subunits. Subunits NuoB, C, D, E, F, and G constitute the peripheral sector of the complex.

It is found in the cell inner membrane. It carries out the reaction a quinone + NADH + 5 H(+)(in) = a quinol + NAD(+) + 4 H(+)(out). Functionally, NDH-1 shuttles electrons from NADH, via FMN and iron-sulfur (Fe-S) centers, to quinones in the respiratory chain. The immediate electron acceptor for the enzyme in this species is believed to be ubiquinone. Couples the redox reaction to proton translocation (for every two electrons transferred, four hydrogen ions are translocated across the cytoplasmic membrane), and thus conserves the redox energy in a proton gradient. The sequence is that of NADH-quinone oxidoreductase subunit C from Francisella tularensis subsp. tularensis (strain WY96-3418).